A 279-amino-acid polypeptide reads, in one-letter code: Prostatic spermine-binding protein (279 aa).

The signal sequence occupies residues 1-17 (MLLLVTLALLAGPTCRA). The residue at position 18 (Gln-18) is a Pyrrolidone carboxylic acid. Residues 18-151 (QNILGNNVGT…LNGMGFKWKN (134 aa)) enclose the Jacalin-type lectin domain. The N-linked (GlcNAc...) asparagine glycan is linked to Asn-62. Composition is skewed to acidic residues over residues 160–177 (DDDK…NEED) and 185–279 (NDHD…EEEE). Positions 160 to 279 (DDDKEDDDDE…DDDNGDEEEE (120 aa)) are disordered.

This sequence to mouse SBP. In terms of tissue distribution, prostate.

Functionally, spermine-binding protein is an androgen regulated ventral prostate glycoprotein that binds various polyamines. This chain is Prostatic spermine-binding protein (Sbp), found in Rattus norvegicus (Rat).